The sequence spans 66 residues: Protein translocase subunit SecE (66 aa).

A helical membrane pass occupies residues 29–49 (LVASTLVVVVAVFIFSLTCLV).

This sequence belongs to the SecE/SEC61-gamma family. In terms of assembly, component of the Sec protein translocase complex. Heterotrimer consisting of SecY, SecE and SecG subunits. The heterotrimers can form oligomers, although 1 heterotrimer is thought to be able to translocate proteins. Interacts with the ribosome. Interacts with SecDF, and other proteins may be involved. Interacts with SecA.

It is found in the cell inner membrane. Its function is as follows. Essential subunit of the Sec protein translocation channel SecYEG. Clamps together the 2 halves of SecY. May contact the channel plug during translocation. The protein is Protein translocase subunit SecE of Rickettsia rickettsii.